Here is a 227-residue protein sequence, read N- to C-terminus: Superoxide dismutase [Cu-Zn] (227 aa).

The N-terminal stretch at 1-19 is a signal peptide; the sequence is MPKLLPPVVLAGCVVALGA. Residue cysteine 20 is the site of N-palmitoyl cysteine attachment. Cysteine 20 carries S-diacylglycerol cysteine lipidation. Residues 23–55 are disordered; it reads PQHASSLPGTTPAVWTGSPSPSGAGAAEAAPAA. Low complexity predominate over residues 39-55; that stretch reads GSPSPSGAGAAEAAPAA. Cu cation contacts are provided by histidine 103 and histidine 105. A disulfide bond links cysteine 110 and cysteine 221. Zn(2+) is bound at residue aspartate 145. Histidine 182 contributes to the Cu cation binding site.

This sequence belongs to the Cu-Zn superoxide dismutase family. Cu cation serves as cofactor. The cofactor is Zn(2+).

Its subcellular location is the cell membrane. It catalyses the reaction 2 superoxide + 2 H(+) = H2O2 + O2. Functionally, destroys radicals which are normally produced within the cells and which are toxic to biological systems. May play a role in favoring mycobacterial survival in phagocytes. The chain is Superoxide dismutase [Cu-Zn] (sodC) from Mycolicibacterium paratuberculosis (strain ATCC BAA-968 / K-10) (Mycobacterium paratuberculosis).